The sequence spans 357 residues: Zinc finger protein 830 (357 aa).

The C2H2-type zinc-finger motif lies at 47 to 69 (CVVCNIQIKSELLWPAHILGKQH). 3 disordered regions span residues 98–126 (RKGSEPENQESKRIKGTEDQPTALKTKLP), 157–194 (DDDEVEGEEYENVNEASTSLQKPAEIPLPPPTSSADRL), and 231–255 (ALPEGFFDDPEADAKVRKVDAPKDQ). Residues 99–115 (KGSEPENQESKRIKGTE) show a composition bias toward basic and acidic residues. Residues 157-168 (DDDEVEGEEYEN) are compositionally biased toward acidic residues. Residues 242-255 (ADAKVRKVDAPKDQ) show a composition bias toward basic and acidic residues. Positions 279-325 (AEEDEEGRLDRQIDEIDEQIECYRRVEHLRDLKDTLQDAKMEVLKSK) form a coiled coil.

It is found in the nucleus. The protein resides in the chromosome. Its subcellular location is the nucleus speckle. May act as an important regulator of the cell cycle that participates in the maintenance of genome integrity. The chain is Zinc finger protein 830 from Xenopus tropicalis (Western clawed frog).